The following is a 33-amino-acid chain: QLHPQDLPHLMTDLSKKKGPWQEEDAAYGWMDF.

At Gln-1 the chain carries Pyrrolidone carboxylic acid. The residue at position 28 (Tyr-28) is a Sulfotyrosine. Phe-33 is subject to Phenylalanine amide.

This sequence belongs to the gastrin/cholecystokinin family. Sulfation enhances proteolytic processing, and blocks peptide degradation. Levels of sulfation differ between proteolytically-cleaved gastrins and between tissues.

It localises to the secreted. Gastrin stimulates the stomach mucosa to produce and secrete hydrochloric acid and the pancreas to secrete its digestive enzymes. It also stimulates smooth muscle contraction and increases blood circulation and water secretion in the stomach and intestine. This chain is Gastrin (GAST), found in Macropus giganteus (Eastern gray kangaroo).